The following is a 174-amino-acid chain: MIESVDLNAQERAGRAFPVSWDQFHRDCRALTWRLNEVGPFAAVIAITRGGLVPAAIVARELGVRVIDTVCIASYEHDRQGELQVLKGVSDSTKALGGGTGKGLLIVDDLVDTGATARLVREMLPDAHFATVYAKPKGRPLVDTFITEVSQDTWIFFPWDLALTFQPPMKDGAG.

Residues 49–50 (RG) and 108–116 (DDLVDTGAT) each bind 5-phospho-alpha-D-ribose 1-diphosphate. D109 contacts Mg(2+). Residues D112 and I155 each coordinate guanine. Positions 112 and 155 each coordinate xanthine. GMP-binding positions include 112 to 116 (DTGAT) and 154 to 155 (WI).

The protein belongs to the purine/pyrimidine phosphoribosyltransferase family. XGPT subfamily. Homotetramer. Requires Mg(2+) as cofactor.

The protein localises to the cell inner membrane. The enzyme catalyses GMP + diphosphate = guanine + 5-phospho-alpha-D-ribose 1-diphosphate. It catalyses the reaction XMP + diphosphate = xanthine + 5-phospho-alpha-D-ribose 1-diphosphate. The catalysed reaction is IMP + diphosphate = hypoxanthine + 5-phospho-alpha-D-ribose 1-diphosphate. Its pathway is purine metabolism; GMP biosynthesis via salvage pathway; GMP from guanine: step 1/1. It participates in purine metabolism; XMP biosynthesis via salvage pathway; XMP from xanthine: step 1/1. Its function is as follows. Purine salvage pathway enzyme that catalyzes the transfer of the ribosyl-5-phosphate group from 5-phospho-alpha-D-ribose 1-diphosphate (PRPP) to the N9 position of the 6-oxopurines guanine and xanthine to form the corresponding ribonucleotides GMP (guanosine 5'-monophosphate) and XMP (xanthosine 5'-monophosphate), with the release of PPi. To a lesser extent, also acts on hypoxanthine. The protein is Xanthine-guanine phosphoribosyltransferase of Rhodopseudomonas palustris (strain BisB18).